We begin with the raw amino-acid sequence, 597 residues long: DNA mismatch repair protein MutL (597 aa).

Belongs to the DNA mismatch repair MutL/HexB family.

This protein is involved in the repair of mismatches in DNA. It is required for dam-dependent methyl-directed DNA mismatch repair. May act as a 'molecular matchmaker', a protein that promotes the formation of a stable complex between two or more DNA-binding proteins in an ATP-dependent manner without itself being part of a final effector complex. This is DNA mismatch repair protein MutL from Rhodopseudomonas palustris (strain HaA2).